We begin with the raw amino-acid sequence, 326 residues long: Zinc transporter 11 (326 aa).

An N-terminal signal peptide occupies residues 1–20 (MSRSLVFFFLFLVLVVPCLS). Residues 21–49 (HGTGGDHDDDEASHVKSSDLKSKSLISVK) are Extracellular-facing. The chain crosses the membrane as a helical span at residues 50–70 (IACLVIIFVLTFISGVSPYFL). At 71 to 75 (KWSQG) the chain is on the cytoplasmic side. A helical membrane pass occupies residues 76 to 96 (FLVLGTQFAGGVFLATALMHF). At 97 to 121 (LSDADETFRGLLTAEGESEPSPAYP) the chain is on the extracellular side. Residues 122-142 (FAYMLACAGFMLTMLADSVIA) traverse the membrane as a helical segment. Topologically, residues 143–174 (HIYSKTQNDLELQGEDKSNQRSATTETSIGDS) are cytoplasmic. Residues 175–195 (ILLIVALCFHSVFEGIAIGIS) form a helical membrane-spanning segment. Over 196-203 (ETKSDAWR) the chain is Extracellular. A helical transmembrane segment spans residues 204 to 224 (ALWTITLHKIFAAIAMGIALL). Over 225–235 (RMIPDRPLFSS) the chain is Cytoplasmic. Residues 236–256 (ITYSFAFAISSPIGVAIGIVI) form a helical membrane-spanning segment. The Extracellular segment spans residues 257-262 (DATTQG). A helical membrane pass occupies residues 263–283 (SIADWIFALSMSLACGVFVYV). Residues 284–305 (SVNHLLAKGYRPNKKVHVDEPR) are Cytoplasmic-facing. Residues 306–326 (YKFLAVLFGVVVIAIVMIWDT) traverse the membrane as a helical segment.

Belongs to the ZIP transporter (TC 2.A.5) family.

It localises to the cell membrane. Its function is as follows. Probably mediates zinc uptake from the rhizosphere. The polypeptide is Zinc transporter 11 (ZIP11) (Arabidopsis thaliana (Mouse-ear cress)).